Here is a 423-residue protein sequence, read N- to C-terminus: FAD-dependent monooxygenase asL6 (423 aa).

FAD is bound by residues 10-13, 34-35, R108, Y290, and D312; these read AGVA and ER. A helical membrane pass occupies residues 371–391; that stretch reads GMGMFQSKFGVGVFYVLLAII.

This sequence belongs to the aromatic-ring hydroxylase family. FAD is required as a cofactor.

The protein localises to the membrane. The protein operates within secondary metabolite biosynthesis; terpenoid biosynthesis. Functionally, FAD-dependent monooxygenase; part of the gene cluster that mediates the biosynthesis of xenovulene A, an unusual meroterpenoid that has potent inhibitory effects on the human gamma-aminobutyrate A (GABAA) benzodiazepine receptor. The first step of xenovulene A biosynthesis is the biosynthesis of 3-methylorcinaldehyde performed by the non-reducing polyketide synthase aspks1. The salicylate hydroxylase asL1 then catalyzes the oxidative dearomatization of 3-methylorcinaldehyde to yield a dearomatized hydroxycyclohexadione. The 2-oxoglutarate-dependent dioxygenase asL3 further catalyzes the oxidative ring expansion to provide the first tropolone metabolite. The cytochrome P450 monooxygenase asR2 allows the synthesis of tropolone hemiacetal. In parallel, a previously unrecognised class of terpene cyclase, asR6, produces alpha-humulene from farnesylpyrophosphate (FPP). The putative Diels-Alderase asR5 probably catalyzes the formation of the tropolone-humulene skeleton by linking humulene and the polyketide moiety. Oxidative-ring contractions catalyzed by asL4 and asL6 then processively remove carbon atoms from the polyketide to yield xenovulene A. In Sarocladium schorii (Acremonium strictum (strain IMI 501407)), this protein is FAD-dependent monooxygenase asL6.